A 199-amino-acid polypeptide reads, in one-letter code: Segregation and condensation protein B (199 aa).

The protein belongs to the ScpB family. As to quaternary structure, homodimer. Homodimerization may be required to stabilize the binding of ScpA to the Smc head domains. Component of a cohesin-like complex composed of ScpA, ScpB and the Smc homodimer, in which ScpA and ScpB bind to the head domain of Smc. The presence of the three proteins is required for the association of the complex with DNA.

It localises to the cytoplasm. Functionally, participates in chromosomal partition during cell division. May act via the formation of a condensin-like complex containing Smc and ScpA that pull DNA away from mid-cell into both cell halves. The polypeptide is Segregation and condensation protein B (Leuconostoc mesenteroides subsp. mesenteroides (strain ATCC 8293 / DSM 20343 / BCRC 11652 / CCM 1803 / JCM 6124 / NCDO 523 / NBRC 100496 / NCIMB 8023 / NCTC 12954 / NRRL B-1118 / 37Y)).